The chain runs to 406 residues: Tryptophan synthase beta chain (406 aa).

K99 carries the N6-(pyridoxal phosphate)lysine modification.

It belongs to the TrpB family. Tetramer of two alpha and two beta chains. Pyridoxal 5'-phosphate is required as a cofactor.

It carries out the reaction (1S,2R)-1-C-(indol-3-yl)glycerol 3-phosphate + L-serine = D-glyceraldehyde 3-phosphate + L-tryptophan + H2O. It functions in the pathway amino-acid biosynthesis; L-tryptophan biosynthesis; L-tryptophan from chorismate: step 5/5. Functionally, the beta subunit is responsible for the synthesis of L-tryptophan from indole and L-serine. Essential for production of nod factors and establishment of symbiosis. This chain is Tryptophan synthase beta chain, found in Rhizobium etli (strain ATCC 51251 / DSM 11541 / JCM 21823 / NBRC 15573 / CFN 42).